The following is a 218-amino-acid chain: Adenylate kinase (218 aa).

Position 10 to 15 (10 to 15 (GAGKGT)) interacts with ATP. The interval 30 to 59 (STGNMLRAAVKAGTPLGLEAKKVMDAGGLV) is NMP. Residues T31, R36, 57–59 (GLV), 85–88 (GFPR), and Q92 each bind AMP. Residues 122-159 (GRRVHPASGRSYHVRFNPPKAEGVDDVTGEPLVQRDDD) are LID. ATP is bound by residues R123 and 132 to 133 (SY). Positions 156 and 167 each coordinate AMP. Position 203 (G203) interacts with ATP.

It belongs to the adenylate kinase family. As to quaternary structure, monomer.

It localises to the cytoplasm. The enzyme catalyses AMP + ATP = 2 ADP. It participates in purine metabolism; AMP biosynthesis via salvage pathway; AMP from ADP: step 1/1. Functionally, catalyzes the reversible transfer of the terminal phosphate group between ATP and AMP. Plays an important role in cellular energy homeostasis and in adenine nucleotide metabolism. The chain is Adenylate kinase from Bordetella parapertussis (strain 12822 / ATCC BAA-587 / NCTC 13253).